Consider the following 297-residue polypeptide: Homoserine kinase (297 aa).

Residue 82–92 (PLTRGLGSSAS) coordinates ATP.

The protein belongs to the GHMP kinase family. Homoserine kinase subfamily.

It is found in the cytoplasm. The catalysed reaction is L-homoserine + ATP = O-phospho-L-homoserine + ADP + H(+). It participates in amino-acid biosynthesis; L-threonine biosynthesis; L-threonine from L-aspartate: step 4/5. Its function is as follows. Catalyzes the ATP-dependent phosphorylation of L-homoserine to L-homoserine phosphate. The chain is Homoserine kinase from Bacillus cereus (strain ZK / E33L).